A 128-amino-acid polypeptide reads, in one-letter code: 3-aminoacrylate deaminase RutC (128 aa).

Belongs to the RutC family.

The catalysed reaction is (Z)-3-aminoacrylate + H2O + H(+) = 3-oxopropanoate + NH4(+). In terms of biological role, involved in pyrimidine catabolism. Catalyzes the deamination of 3-aminoacrylate to malonic semialdehyde, a reaction that can also occur spontaneously. RutC may facilitate the reaction and modulate the metabolic fitness, rather than catalyzing essential functions. This is 3-aminoacrylate deaminase RutC from Azorhizobium caulinodans (strain ATCC 43989 / DSM 5975 / JCM 20966 / LMG 6465 / NBRC 14845 / NCIMB 13405 / ORS 571).